Consider the following 361-residue polypeptide: MKPSLIEKLKTLTYRYSEIGGLLSDSTVINDQDRYRELGKEYAQLEPIVKCFQQFQQNEKAIESAEEMQQEKDPELRKLAEEELEQLTLKKEELEDQLKLLLVPKDPNDERNVFLEIRAGTGGNEAAIFAGDLFRMYARYAETKGWRVNIVSAHEGEHGGFKEVIARVIGEGVYSQLKFESGAHRVQRVPVTESQGRIHTSACTVAIMPEVDEIDQIKINPAELRIDTFRASGAGGQHVNRTDSAIRITHLPTGVVVECQDERSQHKNKARAMSLLQSKLLAAERAKQDQEQAAKRKSLVGSGDRSERIRTYNFPQGRVTDHRINLTLYQLDEVIEGDLDPVIGPLIRELQAEQLAELSGE.

An N5-methylglutamine modification is found at Gln-237. The segment at 286-306 (AKQDQEQAAKRKSLVGSGDRS) is disordered.

The protein belongs to the prokaryotic/mitochondrial release factor family. Post-translationally, methylated by PrmC. Methylation increases the termination efficiency of RF1.

It localises to the cytoplasm. Peptide chain release factor 1 directs the termination of translation in response to the peptide chain termination codons UAG and UAA. The sequence is that of Peptide chain release factor 1 from Coxiella burnetii (strain CbuK_Q154) (Coxiella burnetii (strain Q154)).